Here is a 1829-residue protein sequence, read N- to C-terminus: Afadin (1829 aa).

The Ras-associating 1 domain maps to 39-133; sequence FHGVMRFYFQ…GRFVLKNEND (95 aa). The tract at residues 129–196 is disordered; it reads KNENDAIPAK…PSQGDDSENS (68 aa). A coiled-coil region spans residues 146-186; it reads EKQEKEGVIQNFKRTLSKKEKKEKKKREKEALRQASDKEER. A compositionally biased stretch (basic residues) spans 160–172; the sequence is TLSKKEKKEKKKR. Residues 173–189 show a composition bias toward basic and acidic residues; the sequence is EKEALRQASDKEERPSQ. Phosphoserine is present on residues Ser216, Ser246, and Ser256. Residues 246–348 form the Ras-associating 2 domain; that stretch reads SGGTLRIYAD…LVFQLKRRPP (103 aa). Residues 356–371 show a composition bias toward basic and acidic residues; sequence KKHVEGKPLKGKDRAD. A disordered region spans residues 356-377; it reads KKHVEGKPLKGKDRADGSGYGS. Phosphoserine occurs at positions 391 and 424. The FHA domain occupies 441–507; it reads FGPGIQPHHC…KFVDPIQDHV (67 aa). 5 positions are modified to phosphoserine: Ser512, Ser557, Ser562, Ser589, and Ser655. The interval 539–595 is disordered; sequence DIHSGTALPASRSTTRLDSDRVSSASSTAERGMVKPMIRLDQEQDYRRRESRTQDAA. Over residues 576–591 the composition is skewed to basic and acidic residues; the sequence is IRLDQEQDYRRRESRT. Residues 668–915 enclose the Dilute domain; it reads NKMVSMMEGV…IENVVAVAEN (248 aa). In terms of domain architecture, PDZ spans 1014–1100; it reads VITVTLKKQN…VVTLEVAKQG (87 aa). Residues Ser1090, Ser1114, Ser1133, Ser1147, Ser1150, Ser1179, Ser1180, Ser1189, and Ser1206 each carry the phosphoserine modification. The disordered stretch occupies residues 1114 to 1230; sequence SPMMQRISDR…PRPEAYPIPT (117 aa). A compositionally biased stretch (basic and acidic residues) spans 1120 to 1135; the sequence is ISDRRGSGKPRPKSEG. The segment covering 1139–1150 has biased composition (polar residues); the sequence is YNNSAQNGSPES. The span at 1159-1179 shows a compositional bias: basic and acidic residues; sequence SEPKKLPGDDRLMKNRADHRS. Residues 1195–1217 are compositionally biased toward polar residues; sequence PYTSGTAAKITSVSTGNLCTEEQ. Thr1218 and Thr1239 each carry phosphothreonine. Phosphoserine is present on residues Ser1245 and Ser1282. A compositionally biased stretch (basic and acidic residues) spans 1300 to 1309; sequence ESGMDRKCDS. Disordered stretches follow at residues 1300 to 1533 and 1574 to 1724; these read ESGM…EKQQ and RLQE…KTQV. Positions 1316–1325 are enriched in low complexity; the sequence is SSSVESSTSS. The segment covering 1332 to 1344 has biased composition (polar residues); that stretch reads SSKSVTPASTLTK. Position 1335 is a phosphoserine (Ser1335). Residue Thr1337 is modified to Phosphothreonine. The segment covering 1371-1380 has biased composition (pro residues); it reads LPPPPPPPPA. Positions 1401–1412 are enriched in low complexity; the sequence is NQAAPQSAQVAA. Positions 1413 to 1447 are enriched in basic and acidic residues; the sequence is AERKKREEHQRWYEKEKARLEEERERKRREQERKL. Positions 1417–1454 form a coiled coil; it reads KREEHQRWYEKEKARLEEERERKRREQERKLGQMRTQS. The span at 1450 to 1464 shows a compositional bias: polar residues; it reads MRTQSLNPASFSPLA. Basic and acidic residues predominate over residues 1494 to 1510; the sequence is TIERRDLQYITISKEEL. Phosphoserine occurs at positions 1506 and 1517. The span at 1520–1533 shows a compositional bias: basic and acidic residues; the sequence is PWKRDAREKLEKQQ. The stretch at 1530–1564 forms a coiled coil; sequence EKQQQMHIVDMLSKEIHELQNKGDRTAEESDRLRK. Positions 1583–1594 are enriched in acidic residues; sequence EDDDEEEDDDVD. A coiled-coil region spans residues 1600 to 1672; it reads QRLEAERRAR…SRLEAERRRQ (73 aa). Residues 1602–1682 are compositionally biased toward basic and acidic residues; it reads LEAERRARLQ…HEEAARRLLE (81 aa). Phosphoserine is present on Ser1701. Residues 1715-1724 show a composition bias toward polar residues; sequence RNASYLKTQV. Ser1726 bears the Phosphoserine mark. Residues 1742 to 1829 are disordered; that stretch reads DEEENYVPAG…TELENELNTK (88 aa). The span at 1753 to 1764 shows a compositional bias: polar residues; sequence NSYSGSAGTTAG. A compositionally biased stretch (basic and acidic residues) spans 1768 to 1781; sequence APRDTREKLSRSQD. Ser1779 and Ser1804 each carry phosphoserine. The span at 1809–1829 shows a compositional bias: basic and acidic residues; that stretch reads VSDKVKASRKLTELENELNTK. Lys1812 bears the N6-acetyllysine mark.

As to quaternary structure, homodimer. Interacts with F-actin, nectin and NECTIN3. Essential for the association of nectin and E-cadherin. Isoform 2/s-afadin does not interact with F-actin. Interacts with ZO-1 and occludin, but probably in an indirect manner. Interacts with RIT1, RIT2, NRXN1 and BCR. Interacts with ADAM10; the interaction locks ADAM10 at adherens junctions following ADAM10 recruitment to adherens junctions by TSPAN33. Isoform 1 is widely expressed, including in heart, brain, spleen, lung, liver, skeletal muscle, kidney and testis. Isoform 2 is mainly expressed in the brain.

It is found in the cell junction. It localises to the adherens junction. In terms of biological role, belongs to an adhesion system, probably together with the E-cadherin-catenin system, which plays a role in the organization of homotypic, interneuronal and heterotypic cell-cell adherens junctions (AJs). Nectin- and actin-filament-binding protein that connects nectin to the actin cytoskeleton. May play a key role in the organization of epithelial structures of the embryonic ectoderm. Essential for the organization of adherens junctions. This chain is Afadin, found in Rattus norvegicus (Rat).